Consider the following 345-residue polypeptide: Alkaline phosphatase isozyme conversion protein (345 aa).

A signal peptide spans 1 to 24 (MFSALRHRTAALALGVCFILPVHA). Residues histidine 117, aspartate 143, glutamate 176, and aspartate 204 each coordinate Zn(2+).

The protein belongs to the peptidase M28 family. M28C subfamily.

This protein, presumably an aminopeptidase, mediates the conversion of E.coli alkaline phosphatase isozyme 1, to isozymes 2 and 3 by removing, one by one, the two N-terminal arginine residues. The chain is Alkaline phosphatase isozyme conversion protein (iap) from Escherichia coli (strain K12).